Here is a 344-residue protein sequence, read N- to C-terminus: L-rhamnose-proton symporter (344 aa).

The next 10 membrane-spanning stretches (helical) occupy residues 4–24 (PILLGIFWHFIGAASAACFYA), 38–58 (WSLGGFFSWIILPWSISWWLL), 68–88 (FDMATLLPIFLFGAMWGIGNI), 101–121 (MGIGIAIGVTLIIGTLMTPVL), 137–157 (TLLGVLVAVIGVAIVSYAGLL), 175–195 (LILAVMCGIFSAGMSFAMDAA), 214–234 (LPSYVVIMGGGAIVNLGFCFI), 255–275 (LIANALFAILGGVMWYLQFFF), 290–310 (ISWMLHMSFYVLCGGIVGLLF), and 324–344 (LVLGCVVIILAANIVGLGMAV).

Belongs to the L-rhamnose transporter (TC 2.A.7.6) family.

The protein localises to the cell inner membrane. The catalysed reaction is L-rhamnopyranose(in) + H(+)(in) = L-rhamnopyranose(out) + H(+)(out). Uptake of L-rhamnose across the cytoplasmic membrane with the concomitant transport of protons into the cell (symport system). In Pectobacterium atrosepticum (strain SCRI 1043 / ATCC BAA-672) (Erwinia carotovora subsp. atroseptica), this protein is L-rhamnose-proton symporter.